Consider the following 544-residue polypeptide: CTP synthase (544 aa).

The tract at residues 1 to 266 (MATNYIFVTG…DDFVCDRFRL (266 aa)) is amidoligase domain. CTP is bound at residue Ser14. Residue Ser14 participates in UTP binding. ATP is bound by residues 15–20 (SLGKGI) and Asp72. Mg(2+) is bound by residues Asp72 and Glu140. CTP contacts are provided by residues 147 to 149 (DIE), 187 to 192 (KTKPTQ), and Lys223. UTP-binding positions include 187–192 (KTKPTQ) and Lys223. 239-241 (KDV) contacts ATP. One can recognise a Glutamine amidotransferase type-1 domain in the interval 291–542 (TIGMVGKYVE…VKAAKEHQGK (252 aa)). Gly352 is an L-glutamine binding site. The active-site Nucleophile; for glutamine hydrolysis is Cys379. L-glutamine is bound by residues 380–383 (LGMQ), Glu403, and Arg470. Catalysis depends on residues His515 and Glu517.

This sequence belongs to the CTP synthase family. Homotetramer.

The catalysed reaction is UTP + L-glutamine + ATP + H2O = CTP + L-glutamate + ADP + phosphate + 2 H(+). It carries out the reaction L-glutamine + H2O = L-glutamate + NH4(+). It catalyses the reaction UTP + NH4(+) + ATP = CTP + ADP + phosphate + 2 H(+). It participates in pyrimidine metabolism; CTP biosynthesis via de novo pathway; CTP from UDP: step 2/2. Allosterically activated by GTP, when glutamine is the substrate; GTP has no effect on the reaction when ammonia is the substrate. The allosteric effector GTP functions by stabilizing the protein conformation that binds the tetrahedral intermediate(s) formed during glutamine hydrolysis. Inhibited by the product CTP, via allosteric rather than competitive inhibition. Its function is as follows. Catalyzes the ATP-dependent amination of UTP to CTP with either L-glutamine or ammonia as the source of nitrogen. Regulates intracellular CTP levels through interactions with the four ribonucleotide triphosphates. The polypeptide is CTP synthase (Glaesserella parasuis serovar 5 (strain SH0165) (Haemophilus parasuis)).